The following is a 236-amino-acid chain: Large ribosomal subunit protein uL2 (236 aa).

Residues 198 to 236 (DHPFGGGGRQHPGRPKTVSRGTPPGRKVGSIAARRTGKR) are disordered.

The protein belongs to the universal ribosomal protein uL2 family. In terms of assembly, part of the 50S ribosomal subunit. Forms a bridge to the 30S subunit in the 70S ribosome.

One of the primary rRNA binding proteins. Required for association of the 30S and 50S subunits to form the 70S ribosome, for tRNA binding and peptide bond formation. It has been suggested to have peptidyltransferase activity; this is somewhat controversial. Makes several contacts with the 16S rRNA in the 70S ribosome. In Methanothrix thermoacetophila (strain DSM 6194 / JCM 14653 / NBRC 101360 / PT) (Methanosaeta thermophila), this protein is Large ribosomal subunit protein uL2.